The following is a 396-amino-acid chain: L-lactate dehydrogenase (396 aa).

An FMN hydroxy acid dehydrogenase domain is found at 1 to 380 (MIISAASDYR…TQDSLVQVLG (380 aa)). Tyr-24 is a substrate binding site. Positions 106 and 127 each coordinate FMN. Residue Tyr-129 coordinates substrate. An FMN-binding site is contributed by Thr-155. Residue Arg-164 participates in substrate binding. Lys-251 serves as a coordination point for FMN. The active-site Proton acceptor is His-275. Arg-278 contributes to the substrate binding site. 306-330 (DSGIRNGLDVVRMIALGADTVLLGR) provides a ligand contact to FMN.

It belongs to the FMN-dependent alpha-hydroxy acid dehydrogenase family. The cofactor is FMN.

Its subcellular location is the cell inner membrane. The catalysed reaction is (S)-lactate + A = pyruvate + AH2. Catalyzes the conversion of L-lactate to pyruvate. Is coupled to the respiratory chain. The polypeptide is L-lactate dehydrogenase (Escherichia coli O45:K1 (strain S88 / ExPEC)).